Here is a 339-residue protein sequence, read N- to C-terminus: Aspartate carbamoyltransferase catalytic subunit (339 aa).

Residues arginine 60 and threonine 61 each contribute to the carbamoyl phosphate site. L-aspartate is bound at residue lysine 88. Carbamoyl phosphate contacts are provided by arginine 110, histidine 143, and glutamine 146. Arginine 183 and arginine 254 together coordinate L-aspartate. Residues glycine 295 and proline 296 each contribute to the carbamoyl phosphate site.

This sequence belongs to the aspartate/ornithine carbamoyltransferase superfamily. ATCase family. As to quaternary structure, heterododecamer (2C3:3R2) of six catalytic PyrB chains organized as two trimers (C3), and six regulatory PyrI chains organized as three dimers (R2).

It catalyses the reaction carbamoyl phosphate + L-aspartate = N-carbamoyl-L-aspartate + phosphate + H(+). It participates in pyrimidine metabolism; UMP biosynthesis via de novo pathway; (S)-dihydroorotate from bicarbonate: step 2/3. Functionally, catalyzes the condensation of carbamoyl phosphate and aspartate to form carbamoyl aspartate and inorganic phosphate, the committed step in the de novo pyrimidine nucleotide biosynthesis pathway. In Prochlorococcus marinus (strain MIT 9312), this protein is Aspartate carbamoyltransferase catalytic subunit.